A 128-amino-acid chain; its full sequence is uncharacterized protein (128 aa).

Transmembrane regions (helical) follow at residues 13 to 35 (FQMA…VFFV), 42 to 64 (IIAL…YNGG), and 90 to 112 (LVLT…SIIL).

The protein resides in the cell membrane. This is an uncharacterized protein from Methanocaldococcus jannaschii (strain ATCC 43067 / DSM 2661 / JAL-1 / JCM 10045 / NBRC 100440) (Methanococcus jannaschii).